We begin with the raw amino-acid sequence, 188 residues long: Large ribosomal subunit protein eL18 (188 aa).

The interval 153 to 188 is disordered; the sequence is GKAPGTPHSHTKPYIRSKGRKFERARGRRASRGYKN. Composition is skewed to basic residues over residues 161 to 171 and 178 to 188; these read SHTKPYIRSKG and RGRRASRGYKN.

The protein belongs to the eukaryotic ribosomal protein eL18 family. In terms of assembly, component of the large ribosomal subunit.

The protein localises to the cytoplasm. It is found in the cytosol. Its subcellular location is the rough endoplasmic reticulum. Component of the large ribosomal subunit. The ribosome is a large ribonucleoprotein complex responsible for the synthesis of proteins in the cell. The protein is Large ribosomal subunit protein eL18 (rpl18) of Ictalurus punctatus (Channel catfish).